The chain runs to 398 residues: MSVIYLDNNATTQVDAEVLAAMLPYLTEFYGNPSSMHTFGGQVGKAVQQARGQVAFLLGAEESEIIFTSCGTEGNNAAIKAALAAQPEKRHIITTQVEHAAIINVCKQLEKQGYKVTYLSVDSQGQIDLLELEAALTGDTALVSTMYANNETGVVFPIEQIGLRAKDAGAIFHVDAVQAVGKVPLNLKTSSIDMLTLSGHKLHAPKGIGALYIRRGVRFRPLLVGGHQERGRRAGTENVPGMIALGKAAELAQIHLKDVKREKALRDRLEQGLLSAIPNTEVNGHPTSRLSNTTNIGFKYIEGEAILLSLNKYGICASSGSACTSGSLESSHVLRAMGLPYTILHGSIRFSLSRYTTEAEIDKVLQLMPPIVERLRAISPFSNDQADWLQGREEALAH.

Residues 71–72 (GT), N150, Q178, and 198–200 (SGH) each bind pyridoxal 5'-phosphate. K201 bears the N6-(pyridoxal phosphate)lysine mark. T236 provides a ligand contact to pyridoxal 5'-phosphate. C323 serves as the catalytic Cysteine persulfide intermediate. C323 is a binding site for [2Fe-2S] cluster.

The protein belongs to the class-V pyridoxal-phosphate-dependent aminotransferase family. NifS/IscS subfamily. In terms of assembly, homodimer. Pyridoxal 5'-phosphate serves as cofactor.

The catalysed reaction is (sulfur carrier)-H + L-cysteine = (sulfur carrier)-SH + L-alanine. In terms of biological role, catalyzes the removal of elemental sulfur atoms from cysteine to produce alanine. Seems to participate in the biosynthesis of the nitrogenase metalloclusters by providing the inorganic sulfur required for the Fe-S core formation. The protein is Cysteine desulfurase 2 of Trichormus variabilis (strain ATCC 29413 / PCC 7937) (Anabaena variabilis).